A 518-amino-acid chain; its full sequence is Laccase (518 aa).

The N-terminal stretch at 1–21 (MSRFQSLLSFVLVSLAAVANA) is a signal peptide. 2 Plastocyanin-like domains span residues 23-148 (IGPV…FVVY) and 160-302 (IDND…ILRY). N72 and N75 each carry an N-linked (GlcNAc...) asparagine glycan. 4 residues coordinate Cu cation: H85, H87, H130, and H132. 2 cysteine pairs are disulfide-bonded: C106–C507 and C138–C226. A glycan (N-linked (GlcNAc...) asparagine) is linked at N229. The tract at residues 308 to 330 (VEPTTTQTTSTKPLNEADLHPLT) is disordered. Residues N354, N362, and N398 are each glycosylated (N-linked (GlcNAc...) asparagine). The Plastocyanin-like 3 domain occupies 369–489 (SVPVLLQILS…AGFAVVLAED (121 aa)). Residues H416, H419, H421, H471, C472, H473, and H477 each contribute to the Cu cation site.

Belongs to the multicopper oxidase family. Cu cation serves as cofactor.

Its subcellular location is the secreted. The catalysed reaction is 4 hydroquinone + O2 = 4 benzosemiquinone + 2 H2O. Its function is as follows. Lignin degradation and detoxification of lignin-derived products. Cleaves the C-C and C-O bonds of some phenolic lignin model compounds (such as O- and P-quinols, aminophenols and phenylenediamine). May also be involved in synthesis of phenoxazinone pigments. The protein is Laccase (LCC3-1) of Pycnoporus cinnabarinus (Cinnabar-red polypore).